A 224-amino-acid chain; its full sequence is Phosphoribosylformylglycinamidine synthase subunit PurQ (224 aa).

The region spanning 4–224 (RIGIITFPGT…YSVLDGVLAG (221 aa)) is the Glutamine amidotransferase type-1 domain. C87 acts as the Nucleophile in catalysis. Residues H195 and E197 contribute to the active site.

In terms of assembly, part of the FGAM synthase complex composed of 1 PurL, 1 PurQ and 2 PurS subunits.

Its subcellular location is the cytoplasm. It catalyses the reaction N(2)-formyl-N(1)-(5-phospho-beta-D-ribosyl)glycinamide + L-glutamine + ATP + H2O = 2-formamido-N(1)-(5-O-phospho-beta-D-ribosyl)acetamidine + L-glutamate + ADP + phosphate + H(+). The catalysed reaction is L-glutamine + H2O = L-glutamate + NH4(+). Its pathway is purine metabolism; IMP biosynthesis via de novo pathway; 5-amino-1-(5-phospho-D-ribosyl)imidazole from N(2)-formyl-N(1)-(5-phospho-D-ribosyl)glycinamide: step 1/2. Part of the phosphoribosylformylglycinamidine synthase complex involved in the purines biosynthetic pathway. Catalyzes the ATP-dependent conversion of formylglycinamide ribonucleotide (FGAR) and glutamine to yield formylglycinamidine ribonucleotide (FGAM) and glutamate. The FGAM synthase complex is composed of three subunits. PurQ produces an ammonia molecule by converting glutamine to glutamate. PurL transfers the ammonia molecule to FGAR to form FGAM in an ATP-dependent manner. PurS interacts with PurQ and PurL and is thought to assist in the transfer of the ammonia molecule from PurQ to PurL. The sequence is that of Phosphoribosylformylglycinamidine synthase subunit PurQ from Mycolicibacterium paratuberculosis (strain ATCC BAA-968 / K-10) (Mycobacterium paratuberculosis).